The sequence spans 80 residues: Exodeoxyribonuclease 7 small subunit (80 aa).

Belongs to the XseB family. Heterooligomer composed of large and small subunits.

The protein resides in the cytoplasm. The catalysed reaction is Exonucleolytic cleavage in either 5'- to 3'- or 3'- to 5'-direction to yield nucleoside 5'-phosphates.. Its function is as follows. Bidirectionally degrades single-stranded DNA into large acid-insoluble oligonucleotides, which are then degraded further into small acid-soluble oligonucleotides. In Pseudoalteromonas translucida (strain TAC 125), this protein is Exodeoxyribonuclease 7 small subunit.